A 259-amino-acid chain; its full sequence is 3-deoxy-manno-octulosonate cytidylyltransferase 1 (259 aa).

Belongs to the KdsB family.

Its subcellular location is the cytoplasm. The catalysed reaction is 3-deoxy-alpha-D-manno-oct-2-ulosonate + CTP = CMP-3-deoxy-beta-D-manno-octulosonate + diphosphate. The protein operates within nucleotide-sugar biosynthesis; CMP-3-deoxy-D-manno-octulosonate biosynthesis; CMP-3-deoxy-D-manno-octulosonate from 3-deoxy-D-manno-octulosonate and CTP: step 1/1. It functions in the pathway bacterial outer membrane biogenesis; lipopolysaccharide biosynthesis. In terms of biological role, activates KDO (a required 8-carbon sugar) for incorporation into bacterial lipopolysaccharide in Gram-negative bacteria. The chain is 3-deoxy-manno-octulosonate cytidylyltransferase 1 from Hydrogenovibrio crunogenus (strain DSM 25203 / XCL-2) (Thiomicrospira crunogena).